A 185-amino-acid chain; its full sequence is C-type lectin domain family 5 member A (185 aa).

Topologically, residues 1–4 (MNWH) are cytoplasmic. The helical; Signal-anchor for type II membrane protein transmembrane segment at 5–27 (MIISGLIVVVLKIVGMTFFLLYF) threads the bilayer. Topologically, residues 28-185 (PQIFGEHNVS…YRSICEKSAQ (158 aa)) are extracellular. N-linked (GlcNAc...) asparagine glycans are attached at residues Asn-35 and Asn-55. The cysteines at positions 68 and 79 are disulfide-linked. The 107-residue stretch at 75 to 181 (HQGRCFFLST…CDVNYRSICE (107 aa)) folds into the C-type lectin domain. N-linked (GlcNAc...) asparagine glycans are attached at residues Asn-90, Asn-117, Asn-141, and Asn-146. 2 disulfide bridges follow: Cys-96–Cys-180 and Cys-158–Cys-172.

As to quaternary structure, monomer. Homodimer. The majority of CLEC5A is expressed as a monomeric form on macrophages. Interacts with TYROBP/DAP12. The interaction with TYROBP is required for CLEC5 cell surface expression. Interacts with HCST/DAP10. Forms a CLEC5A/TYROBP/HCST trimolecular complex depending almost solely on TYROBP. N-glycosylated. Contains sialic acid residues. In terms of tissue distribution, constitutively expressed in monocytes and macrophages.

Its subcellular location is the cell membrane. Its function is as follows. Functions as a positive regulator of osteoclastogenesis. Cell surface receptor that signals via TYROBP. Regulates inflammatory responses. In Sus scrofa (Pig), this protein is C-type lectin domain family 5 member A (CLEC5A).